A 240-amino-acid polypeptide reads, in one-letter code: Phosphoribosylaminoimidazole-succinocarboxamide synthase (240 aa).

It belongs to the SAICAR synthetase family.

It catalyses the reaction 5-amino-1-(5-phospho-D-ribosyl)imidazole-4-carboxylate + L-aspartate + ATP = (2S)-2-[5-amino-1-(5-phospho-beta-D-ribosyl)imidazole-4-carboxamido]succinate + ADP + phosphate + 2 H(+). The protein operates within purine metabolism; IMP biosynthesis via de novo pathway; 5-amino-1-(5-phospho-D-ribosyl)imidazole-4-carboxamide from 5-amino-1-(5-phospho-D-ribosyl)imidazole-4-carboxylate: step 1/2. This chain is Phosphoribosylaminoimidazole-succinocarboxamide synthase, found in Coxiella burnetii (strain RSA 493 / Nine Mile phase I).